We begin with the raw amino-acid sequence, 372 residues long: MGVDVSMTTSIEPAEDLSVLSGLTEITRFAGVGTAVSASSYSQSEVLDILDVEDPKIRSVFLNSAIDRRFLTLPPESPGGGRVSEPQGDLLDKHKELAVDMGCRALEACLKSAGATLSDLRHLCCVTSTGFLTPGLSALIIRELGIDPHCSRSDIVGMGCNAGLNALNVVAGWSAAHPGELGVVLCSEACSAAYALDGTMRTAVVNSLFGDGSAALAVISGDGRVPGPRVLKFASYIITDALDAMRYDWDRDQDRFSFFLDPQIPYVVGAHAEIVADRLLSGTGLRRSDIGHWLVHSGGKKVIDSVVVNLGLSRHDVRHTTGVLRDYGNLSSGSFLFSYERLAEEGVTRPGDYGVLMTMGPGSTIEMALIQW.

C160 is a catalytic residue.

It belongs to the thiolase-like superfamily. Chalcone/stilbene synthases family.

It carries out the reaction 4 malonyl-CoA + 4 H(+) = (3,5-dihydroxyphenyl)acetyl-CoA + 4 CO2 + 3 CoA + H2O. It participates in antibiotic biosynthesis. Functionally, involved in the biosynthesis of the nonproteinogenic amino acid monomer (S)-3,5-dihydroxyphenylglycine (Dpg) responsible of the production of balhimycin antibiotic. Catalyzes the Claisen condensation of four molecules of malonyl-CoA to yield 3,5-dihydroxyphenylacetyl-CoA (DPA-CoA) and three free coenzyme A (CoA). DpgA requires the presence of the dehydratases DpgB and DpgD to facilitate the aromatization of the DPA-S-DgpA or DPA-S-CoA intermediate. The polypeptide is 3,5-dihydroxyphenylacetyl-CoA synthase (Amycolatopsis balhimycina).